A 370-amino-acid chain; its full sequence is Cytochrome b (370 aa).

The next 4 membrane-spanning stretches (helical) occupy residues 25–45, 69–90, 105–125, and 170–190; these read FGSM…FLAV, WMMQ…YIHI, WFSG…GYVL, and FFAL…LHIL. Heme b is bound by residues His-75 and His-89. Residues His-174 and His-188 each coordinate heme b. Residue His-193 coordinates a ubiquinone. Transmembrane regions (helical) follow at residues 218–238, 280–300, 312–332, and 339–358; these read YKDM…VSFF, LGGA…PFTH, FMQL…WTAT, and FTTI…ISNP.

This sequence belongs to the cytochrome b family. As to quaternary structure, the cytochrome bc1 complex contains 3 respiratory subunits (MT-CYB, CYC1 and UQCRFS1), 2 core proteins (UQCRC1 and UQCRC2) and probably 6 low-molecular weight proteins. It depends on heme b as a cofactor.

The protein localises to the mitochondrion inner membrane. Component of the ubiquinol-cytochrome c reductase complex (complex III or cytochrome b-c1 complex) that is part of the mitochondrial respiratory chain. The b-c1 complex mediates electron transfer from ubiquinol to cytochrome c. Contributes to the generation of a proton gradient across the mitochondrial membrane that is then used for ATP synthesis. The polypeptide is Cytochrome b (MT-CYB) (Chilabothrus strigilatus mccraniei (Ragged Island boa constrictor)).